Reading from the N-terminus, the 706-residue chain is Elongation factor G (706 aa).

Residues 8–297 (SYVRNIGIGA…AVVDYLPSPN (290 aa)) enclose the tr-type G domain. GTP is bound by residues 17–24 (AHIDAGKT), 95–99 (DTPGH), and 149–152 (NKMD).

The protein belongs to the TRAFAC class translation factor GTPase superfamily. Classic translation factor GTPase family. EF-G/EF-2 subfamily.

It localises to the cytoplasm. Its function is as follows. Catalyzes the GTP-dependent ribosomal translocation step during translation elongation. During this step, the ribosome changes from the pre-translocational (PRE) to the post-translocational (POST) state as the newly formed A-site-bound peptidyl-tRNA and P-site-bound deacylated tRNA move to the P and E sites, respectively. Catalyzes the coordinated movement of the two tRNA molecules, the mRNA and conformational changes in the ribosome. The chain is Elongation factor G from Orientia tsutsugamushi (strain Ikeda) (Rickettsia tsutsugamushi).